The chain runs to 365 residues: Probable L-tyrosine/L-aspartate decarboxylase (365 aa).

Position 224 is an N6-(pyridoxal phosphate)lysine (K224).

The protein belongs to the group II decarboxylase family. MfnA subfamily. The cofactor is pyridoxal 5'-phosphate.

The catalysed reaction is L-tyrosine + H(+) = tyramine + CO2. It carries out the reaction L-aspartate + H(+) = beta-alanine + CO2. The protein operates within cofactor biosynthesis; methanofuran biosynthesis. It participates in cofactor biosynthesis; coenzyme A biosynthesis. Catalyzes the decarboxylation of L-tyrosine to produce tyramine for methanofuran biosynthesis. Can also catalyze the decarboxylation of L-aspartate to produce beta-alanine for coenzyme A (CoA) biosynthesis. The sequence is that of Probable L-tyrosine/L-aspartate decarboxylase from Methanoregula boonei (strain DSM 21154 / JCM 14090 / 6A8).